A 425-amino-acid chain; its full sequence is MNSIWKQYIDILQGVVKPALGCTEPICAAYAASVATQMLGSKPETIDVFVSDNLYKNSMGVFVPRTGRVGLAIAAATGAIGGNPDAGLEVLAKITEEEVNEAQSLIDNGCVVVQRETTDEFIYCRVIAKNALHSAEVTISGGHTLIIEKRLDGNIIFTLDSSLPKTSTASICDGVDITISSIYDFATQAEFDDIKFILEAKELNIALAQEGLNNPYGLEVGRTYQKNIEKGLLAKSLDSDILIYTSAASDARMGGATLPAMSNYGSGNQGIAATIPVVKMADFFNADDEKLARAFIMSHLGAIYIKSHYPPLSAFCGNAVTSAAASMAMVYLAGGTFEQSCSAIQNTISDTSGMICDGAKSTCAMKVGSSAQSAMKSALLALNDHCVTKQGVIADDVEKTIKNIGRMITTGMPNIDHEIIEIMAS.

It belongs to the UPF0597 family.

The sequence is that of UPF0597 protein VFMJ11_0655 from Aliivibrio fischeri (strain MJ11) (Vibrio fischeri).